Here is a 140-residue protein sequence, read N- to C-terminus: Endoribonuclease YbeY (140 aa).

Positions 100, 104, and 110 each coordinate Zn(2+).

The protein belongs to the endoribonuclease YbeY family. Requires Zn(2+) as cofactor.

The protein resides in the cytoplasm. Its function is as follows. Single strand-specific metallo-endoribonuclease involved in late-stage 70S ribosome quality control and in maturation of the 3' terminus of the 16S rRNA. In Helicobacter pylori (strain ATCC 700392 / 26695) (Campylobacter pylori), this protein is Endoribonuclease YbeY.